Reading from the N-terminus, the 353-residue chain is Photosystem II protein D1 (353 aa).

Thr2 carries the N-acetylthreonine modification. Thr2 is modified (phosphothreonine). A run of 3 helical transmembrane segments spans residues 29–46 (YIGW…TATS), 118–133 (HFLL…EWEL), and 142–156 (WIAV…AATA). His118 lines the chlorophyll a pocket. Pheophytin a is bound at residue Tyr126. The [CaMn4O5] cluster site is built by Asp170 and Glu189. A helical membrane pass occupies residues 197–218 (FHMLGVAGVFGGSLFSAMHGSL). Residue His198 participates in chlorophyll a binding. Residues His215 and 264 to 265 (SF) each bind a quinone. His215 is a Fe cation binding site. Position 272 (His272) interacts with Fe cation. Residues 274–288 (LLAAWPVVGIWFTAL) traverse the membrane as a helical segment. [CaMn4O5] cluster is bound by residues His332, Glu333, Asp342, and Ala344. Positions 345 to 353 (AVEAPSTNG) are excised as a propeptide.

The protein belongs to the reaction center PufL/M/PsbA/D family. In terms of assembly, PSII is composed of 1 copy each of membrane proteins PsbA, PsbB, PsbC, PsbD, PsbE, PsbF, PsbH, PsbI, PsbJ, PsbK, PsbL, PsbM, PsbT, PsbX, PsbY, PsbZ, Psb30/Ycf12, at least 3 peripheral proteins of the oxygen-evolving complex and a large number of cofactors. It forms dimeric complexes. It depends on The D1/D2 heterodimer binds P680, chlorophylls that are the primary electron donor of PSII, and subsequent electron acceptors. It shares a non-heme iron and each subunit binds pheophytin, quinone, additional chlorophylls, carotenoids and lipids. D1 provides most of the ligands for the Mn4-Ca-O5 cluster of the oxygen-evolving complex (OEC). There is also a Cl(-1) ion associated with D1 and D2, which is required for oxygen evolution. The PSII complex binds additional chlorophylls, carotenoids and specific lipids. as a cofactor. Tyr-161 forms a radical intermediate that is referred to as redox-active TyrZ, YZ or Y-Z. In terms of processing, C-terminally processed by CTPA; processing is essential to allow assembly of the oxygen-evolving complex and thus photosynthetic growth.

The protein localises to the plastid. Its subcellular location is the chloroplast thylakoid membrane. The catalysed reaction is 2 a plastoquinone + 4 hnu + 2 H2O = 2 a plastoquinol + O2. Its function is as follows. Photosystem II (PSII) is a light-driven water:plastoquinone oxidoreductase that uses light energy to abstract electrons from H(2)O, generating O(2) and a proton gradient subsequently used for ATP formation. It consists of a core antenna complex that captures photons, and an electron transfer chain that converts photonic excitation into a charge separation. The D1/D2 (PsbA/PsbD) reaction center heterodimer binds P680, the primary electron donor of PSII as well as several subsequent electron acceptors. This Dioscorea elephantipes (Elephant's foot yam) protein is Photosystem II protein D1.